We begin with the raw amino-acid sequence, 613 residues long: MTPPPASAWTRSKPPLLRFLDTCLNEFSAETSGAVADYIPELGNADPAYFGISLATLDGHVYEVGDSRVPFTIQSMSKPFVFALALDLLGAGRVESAIGVEPSGDPFNSIRLNSDNHPFNPMVNAGAIACTGLIYDSKGAEAFEQIRLALSRFAGRDLAVDEAVYSSESQTGDRNRAIGYLLKTNAVISDNVAAVLDVYFRQCAVLVTARDIAVMAATLANRGINPVTGEQVMSAYAISRTLSVMTSSGMYDYAGEWIYRIGIPAKSGVGGGILAALPARLGLGSYSPKLDKHGNSVRGIKVCEALSSHYDLHMLNRSDDARNAVIADYDIGKSPSRRVRRAQEREILAAHEQEVRIIELVGTLSLSAVDYVSRRLAGRPRPQFVIFDLHRVTSTTRAGARLVAEAFEELAALNVTVVLSGVRRASKEWNTLREWTAELKNVRDFYLLDTAIEWAEDQIVYRYGGSIDFHETTELAEQPLLEGLSADELAELGAICTIRTYQSGAKILTTGDPADALFFLRSGAVHVTLPDGVRLATLTAGMAFGEMALLEQTRSADVFADMAATAFEAPLKDFERFREQHPRASERIMRNLAQLLADRLIVANAKVDILTST.

The segment at Gly-33–Leu-315 is glutaminase. Residues Ser-75, Asn-124, Glu-168, Asn-175, Tyr-199, Tyr-251, and Val-269 each contribute to the substrate site. An STAS domain is found at Arg-345 to Asp-457. Leu-480–Leu-595 is an a nucleoside 3',5'-cyclic phosphate binding site.

The protein belongs to the glutaminase family. Homotetramer.

The catalysed reaction is L-glutamine + H2O = L-glutamate + NH4(+). The chain is Glutaminase 1 (glsA1) from Bradyrhizobium diazoefficiens (strain JCM 10833 / BCRC 13528 / IAM 13628 / NBRC 14792 / USDA 110).